The primary structure comprises 350 residues: Biotin synthase 1 (350 aa).

Residues 71–296 (EEVEVEGIIS…KTILRFAGGR (226 aa)) form the Radical SAM core domain. The [4Fe-4S] cluster site is built by cysteine 86, cysteine 90, and cysteine 93. The [2Fe-2S] cluster site is built by cysteine 129, cysteine 221, and arginine 291.

Belongs to the radical SAM superfamily. Biotin synthase family. As to quaternary structure, homodimer. [4Fe-4S] cluster serves as cofactor. It depends on [2Fe-2S] cluster as a cofactor.

It carries out the reaction (4R,5S)-dethiobiotin + (sulfur carrier)-SH + 2 reduced [2Fe-2S]-[ferredoxin] + 2 S-adenosyl-L-methionine = (sulfur carrier)-H + biotin + 2 5'-deoxyadenosine + 2 L-methionine + 2 oxidized [2Fe-2S]-[ferredoxin]. Its pathway is cofactor biosynthesis; biotin biosynthesis; biotin from 7,8-diaminononanoate: step 2/2. Functionally, catalyzes the conversion of dethiobiotin (DTB) to biotin by the insertion of a sulfur atom into dethiobiotin via a radical-based mechanism. In Corynebacterium diphtheriae (strain ATCC 700971 / NCTC 13129 / Biotype gravis), this protein is Biotin synthase 1.